A 156-amino-acid chain; its full sequence is uncharacterized protein (156 aa).

This is an uncharacterized protein from Acheta domesticus (House cricket).